Here is a 415-residue protein sequence, read N- to C-terminus: L-cysteine:1D-myo-inositol 2-amino-2-deoxy-alpha-D-glucopyranoside ligase (415 aa).

Residues 1-20 (MQSWSETAVPSVPGQGPPLR) form a disordered region. Residue cysteine 43 participates in Zn(2+) binding. L-cysteinyl-5'-AMP is bound by residues 43-46 (CGIT), threonine 58, and 81-83 (NVT). Residues 45-55 (ITPYDATHLGH) carry the 'HIGH' region motif. A 'ERGGDP' region motif is present at residues 187–192 (ERGGDP). Tryptophan 227 serves as a coordination point for L-cysteinyl-5'-AMP. Zn(2+) is bound at residue cysteine 231. L-cysteinyl-5'-AMP is bound at residue 249-251 (GSD). Histidine 256 contacts Zn(2+). L-cysteinyl-5'-AMP is bound at residue isoleucine 283. Residues 289-293 (KMSKS) carry the 'KMSKS' region motif.

Belongs to the class-I aminoacyl-tRNA synthetase family. MshC subfamily. As to quaternary structure, monomer. The cofactor is Zn(2+).

The catalysed reaction is 1D-myo-inositol 2-amino-2-deoxy-alpha-D-glucopyranoside + L-cysteine + ATP = 1D-myo-inositol 2-(L-cysteinylamino)-2-deoxy-alpha-D-glucopyranoside + AMP + diphosphate + H(+). Its function is as follows. Catalyzes the ATP-dependent condensation of GlcN-Ins and L-cysteine to form L-Cys-GlcN-Ins. This is L-cysteine:1D-myo-inositol 2-amino-2-deoxy-alpha-D-glucopyranoside ligase from Rhodococcus jostii (strain RHA1).